The chain runs to 415 residues: L-cysteine:1D-myo-inositol 2-amino-2-deoxy-alpha-D-glucopyranoside ligase (415 aa).

The segment at 1-20 is disordered; the sequence is MQSWSETAVPSVPGQGPPLR. A Zn(2+)-binding site is contributed by cysteine 43. L-cysteinyl-5'-AMP contacts are provided by residues 43–46, threonine 58, and 81–83; these read CGIT and NVT. Residues 45-55 carry the 'HIGH' region motif; it reads ITPYDATHLGH. The short motif at 187 to 192 is the 'ERGGDP' region element; sequence ERGGDP. Position 227 (tryptophan 227) interacts with L-cysteinyl-5'-AMP. Cysteine 231 is a Zn(2+) binding site. 249–251 serves as a coordination point for L-cysteinyl-5'-AMP; that stretch reads GSD. Histidine 256 serves as a coordination point for Zn(2+). Residue isoleucine 283 participates in L-cysteinyl-5'-AMP binding. A 'KMSKS' region motif is present at residues 289-293; it reads KMSKS.

It belongs to the class-I aminoacyl-tRNA synthetase family. MshC subfamily. Monomer. Zn(2+) is required as a cofactor.

It carries out the reaction 1D-myo-inositol 2-amino-2-deoxy-alpha-D-glucopyranoside + L-cysteine + ATP = 1D-myo-inositol 2-(L-cysteinylamino)-2-deoxy-alpha-D-glucopyranoside + AMP + diphosphate + H(+). Catalyzes the ATP-dependent condensation of GlcN-Ins and L-cysteine to form L-Cys-GlcN-Ins. In Rhodococcus jostii (strain RHA1), this protein is L-cysteine:1D-myo-inositol 2-amino-2-deoxy-alpha-D-glucopyranoside ligase.